We begin with the raw amino-acid sequence, 196 residues long: Ribosome maturation factor RimP (196 aa).

The tract at residues G163 to E196 is disordered.

Belongs to the RimP family.

It is found in the cytoplasm. Its function is as follows. Required for maturation of 30S ribosomal subunits. The chain is Ribosome maturation factor RimP from Stenotrophomonas maltophilia (strain R551-3).